Consider the following 598-residue polypeptide: MDKINIRNFAIIAHIDHGKSTLADRLIEECNGLEKREMKDQVLDSMDIERERGITIKAQTVRLMYTAKDGKVYYLNLMDTPGHVDFSYEVSRSLAACEGSLLVVDSTQGVEAQTLANVYKAIDSNHEIIPVLNKIDLASSDPDKVKSQIEEIIGIDASESLLVSAKSGIGIKDVLEAIVSRLPAPSGNFDNPLKAILVDTWYDTYLGIVILLRVVDGVIKKGMKIVMMSSNAAYQVDNIGIFTPHKKIVDQLSVGEIGFITASIKELSDCKIGDTITEEQRRCDNPMPGFRTIHPVVFCSIFPNEAGDFERLREALKKLQLNDASFTFDIEVSSALGYGFRCGFLGMLHLEVIQERLEREFNLDLTATAPGVVYQIISKNGILREVHNPHDFGDVQDIASIKEPWICATIMVPDQYLGVVMSLCNNKRGEKVDLSYSGNTALLKYRLPLSEVVFDFYDRIKSISKGYASLDWEMDGYMDSEIAKLTILINSEPVDALACIVHKSKVEQRGREICLRLKDLIPRQQYKIAIQAAVGSKIIARETISPYRKDVTAKLYGGDVTRRMKLLEKQKKGKKRLRAIGNVNVPHNAFIQALKIID.

The tr-type G domain occupies 4–186 (INIRNFAIIA…AIVSRLPAPS (183 aa)). GTP is bound by residues 16-21 (DHGKST) and 133-136 (NKID).

This sequence belongs to the TRAFAC class translation factor GTPase superfamily. Classic translation factor GTPase family. LepA subfamily.

The protein resides in the cell inner membrane. The enzyme catalyses GTP + H2O = GDP + phosphate + H(+). Functionally, required for accurate and efficient protein synthesis under certain stress conditions. May act as a fidelity factor of the translation reaction, by catalyzing a one-codon backward translocation of tRNAs on improperly translocated ribosomes. Back-translocation proceeds from a post-translocation (POST) complex to a pre-translocation (PRE) complex, thus giving elongation factor G a second chance to translocate the tRNAs correctly. Binds to ribosomes in a GTP-dependent manner. The polypeptide is Elongation factor 4 (Ehrlichia ruminantium (strain Gardel)).